The following is a 130-amino-acid chain: Con-Ins G2 (130 aa).

The signal sequence occupies residues 1–24 (MTTSSYFLLVALGLLLYVRQSFST). 4 cysteine pairs are disulfide-bonded: cysteine 29-cysteine 100, cysteine 41-cysteine 103, cysteine 53-cysteine 116, and cysteine 102-cysteine 107. Residue proline 34 is modified to 4-hydroxyproline; partial. Residues 54-74 (EEEEARRGGTNDGGKKRRRAS) form a disordered region. A propeptide spans 59–92 (RRGGTNDGGKKRRRASPLWKRRRFLSMLKARAKR) (c peptide). The residue at position 111 (glutamate 111) is a 4-carboxyglutamate; partial.

This sequence belongs to the insulin family. Heterodimer of A and B chains; disulfide-linked. In terms of tissue distribution, expressed by the venom gland.

Its subcellular location is the secreted. In terms of biological role, this venom insulin, from a fish-hunting cone snail, facilitates prey capture by rapidly inducing hypoglycemic shock. Intraperitoneal injection of this peptide into zebrafish lowers blood glucose with the same potency than human insulin. In vivo, when applied to water, this peptide reduces overall locomotor activity of zebrafish larvae, observed as a significant decrease in the percentage of time spent swimming and movement frequency. The chain is Con-Ins G2 from Conus geographus (Geography cone).